Consider the following 385-residue polypeptide: Protein pelota homolog (385 aa).

A Glycyl lysine isopeptide (Lys-Gly) (interchain with G-Cter in SUMO2) cross-link involves residue Lys-162. Phosphoserine is present on residues Ser-374, Ser-380, Ser-381, and Ser-382.

The protein belongs to the eukaryotic release factor 1 family. Pelota subfamily. As to quaternary structure, component of the Pelota-HBS1L complex, also named Dom34-Hbs1 complex, composed of PELO and HBS1L. Interacts with PINK1. Interacts with ABCE1. Interacts with CNOT4. Requires a divalent metal cation as cofactor.

The protein localises to the cytoplasm. Component of the Pelota-HBS1L complex, a complex that recognizes stalled ribosomes and triggers the No-Go Decay (NGD) pathway. In the Pelota-HBS1L complex, PELO recognizes ribosomes stalled at the 3' end of an mRNA and engages stalled ribosomes by destabilizing mRNA in the mRNA channel. Following mRNA extraction from stalled ribosomes by the SKI complex, the Pelota-HBS1L complex promotes recruitment of ABCE1, which drives the disassembly of stalled ribosomes, followed by degradation of damaged mRNAs as part of the NGD pathway. As part of the PINK1-regulated signaling, upon mitochondrial damage is recruited to the ribosome/mRNA-ribonucleoprotein complex associated to mitochondrial outer membrane thereby enabling the recruitment of autophagy receptors and induction of mitophagy. The chain is Protein pelota homolog (PELO) from Pongo abelii (Sumatran orangutan).